The following is an 87-amino-acid chain: KLWRMTGTWLGGFCHSIIQIPVIIQLPFCGPNVIDHYFRDLQPLFKLACTDTFMEGVIVLAFSGLFSVFSFLILVSSYIVILVNLRN.

Residues Lys-1–Thr-8 are Cytoplasmic-facing. A helical membrane pass occupies residues Trp-9–Cys-29. Topologically, residues Gly-30–Glu-55 are extracellular. A helical membrane pass occupies residues Gly-56–Ser-76. Residues Ser-77–Asn-87 lie on the Cytoplasmic side of the membrane.

Belongs to the G-protein coupled receptor 1 family.

Its subcellular location is the cell membrane. Its function is as follows. Odorant receptor. The chain is Olfactory receptor-like protein HbT2 from Apis mellifera ligustica (Common honeybee).